The sequence spans 192 residues: Xanthine phosphoribosyltransferase (192 aa).

Xanthine contacts are provided by L20 and N27. 128 to 132 (ANGDA) contributes to the 5-phospho-alpha-D-ribose 1-diphosphate binding site. Residue K156 coordinates xanthine.

It belongs to the purine/pyrimidine phosphoribosyltransferase family. Xpt subfamily. As to quaternary structure, homodimer.

Its subcellular location is the cytoplasm. The catalysed reaction is XMP + diphosphate = xanthine + 5-phospho-alpha-D-ribose 1-diphosphate. Its pathway is purine metabolism; XMP biosynthesis via salvage pathway; XMP from xanthine: step 1/1. In terms of biological role, converts the preformed base xanthine, a product of nucleic acid breakdown, to xanthosine 5'-monophosphate (XMP), so it can be reused for RNA or DNA synthesis. This is Xanthine phosphoribosyltransferase from Staphylococcus aureus (strain bovine RF122 / ET3-1).